Consider the following 103-residue polypeptide: Truncated secreted TNF-receptor-like protein A53 (103 aa).

Residues 36-73 (SCDKGEYLDKRHNQCCNRCPPGEFAKVRCNGNDNTKCE) form a TNFR-Cys 1 repeat. Cystine bridges form between C37–C50, C51–C64, and C54–C72. The TNFR-Cys 2; truncated repeat unit spans residues 74-103 (RCPPHTYTTIPIILMDVINVENAQQDHLIR).

The protein belongs to the poxviridae A53R protein family.

The protein is Truncated secreted TNF-receptor-like protein A53 of Vaccinia virus (strain Copenhagen) (VACV).